Here is a 253-residue protein sequence, read N- to C-terminus: 2-C-methyl-D-erythritol 4-phosphate cytidylyltransferase (253 aa).

It belongs to the IspD/TarI cytidylyltransferase family. IspD subfamily.

The catalysed reaction is 2-C-methyl-D-erythritol 4-phosphate + CTP + H(+) = 4-CDP-2-C-methyl-D-erythritol + diphosphate. Its pathway is isoprenoid biosynthesis; isopentenyl diphosphate biosynthesis via DXP pathway; isopentenyl diphosphate from 1-deoxy-D-xylulose 5-phosphate: step 2/6. Its function is as follows. Catalyzes the formation of 4-diphosphocytidyl-2-C-methyl-D-erythritol from CTP and 2-C-methyl-D-erythritol 4-phosphate (MEP). The protein is 2-C-methyl-D-erythritol 4-phosphate cytidylyltransferase of Chlorobium chlorochromatii (strain CaD3).